Reading from the N-terminus, the 95-residue chain is Small ribosomal subunit protein bS18 (95 aa).

The protein belongs to the bacterial ribosomal protein bS18 family. Part of the 30S ribosomal subunit. Forms a tight heterodimer with protein bS6.

In terms of biological role, binds as a heterodimer with protein bS6 to the central domain of the 16S rRNA, where it helps stabilize the platform of the 30S subunit. In Rickettsia felis (strain ATCC VR-1525 / URRWXCal2) (Rickettsia azadi), this protein is Small ribosomal subunit protein bS18.